Reading from the N-terminus, the 368-residue chain is Glutamate 5-kinase (368 aa).

K9 provides a ligand contact to ATP. Substrate is bound by residues S49, D136, and N148. ATP is bound by residues 168–169 and 210–216; these read TD and TGGMMTK. In terms of domain architecture, PUA spans 275-353; it reads AGIITIDNGA…ADIENVLGYE (79 aa).

The protein belongs to the glutamate 5-kinase family.

The protein localises to the cytoplasm. The enzyme catalyses L-glutamate + ATP = L-glutamyl 5-phosphate + ADP. It participates in amino-acid biosynthesis; L-proline biosynthesis; L-glutamate 5-semialdehyde from L-glutamate: step 1/2. Its function is as follows. Catalyzes the transfer of a phosphate group to glutamate to form L-glutamate 5-phosphate. The polypeptide is Glutamate 5-kinase (Haemophilus influenzae (strain PittGG)).